The chain runs to 288 residues: uncharacterized protein (288 aa).

This is an uncharacterized protein from Acanthamoeba polyphaga mimivirus (APMV).